The following is a 567-amino-acid chain: 2-succinyl-5-enolpyruvyl-6-hydroxy-3-cyclohexene-1-carboxylate synthase (567 aa).

Belongs to the TPP enzyme family. MenD subfamily. In terms of assembly, homodimer. Requires Mg(2+) as cofactor. It depends on Mn(2+) as a cofactor. Thiamine diphosphate is required as a cofactor.

It carries out the reaction isochorismate + 2-oxoglutarate + H(+) = 5-enolpyruvoyl-6-hydroxy-2-succinyl-cyclohex-3-ene-1-carboxylate + CO2. It functions in the pathway quinol/quinone metabolism; 1,4-dihydroxy-2-naphthoate biosynthesis; 1,4-dihydroxy-2-naphthoate from chorismate: step 2/7. It participates in quinol/quinone metabolism; menaquinone biosynthesis. Catalyzes the thiamine diphosphate-dependent decarboxylation of 2-oxoglutarate and the subsequent addition of the resulting succinic semialdehyde-thiamine pyrophosphate anion to isochorismate to yield 2-succinyl-5-enolpyruvyl-6-hydroxy-3-cyclohexene-1-carboxylate (SEPHCHC). In Shewanella loihica (strain ATCC BAA-1088 / PV-4), this protein is 2-succinyl-5-enolpyruvyl-6-hydroxy-3-cyclohexene-1-carboxylate synthase.